We begin with the raw amino-acid sequence, 88 residues long: Acyl carrier protein (88 aa).

The region spanning 4-79 is the Carrier domain; that stretch reads DSVPAKVMEI…AAVDYIQNKM (76 aa). The residue at position 39 (Ser-39) is an O-(pantetheine 4'-phosphoryl)serine.

It belongs to the acyl carrier protein (ACP) family. 4'-phosphopantetheine is transferred from CoA to a specific serine of apo-ACP by AcpS. This modification is essential for activity because fatty acids are bound in thioester linkage to the sulfhydryl of the prosthetic group.

The protein resides in the cytoplasm. It participates in lipid metabolism; fatty acid biosynthesis. Carrier of the growing fatty acid chain in fatty acid biosynthesis. This Trichodesmium erythraeum (strain IMS101) protein is Acyl carrier protein.